We begin with the raw amino-acid sequence, 415 residues long: Imidazolonepropionase (415 aa).

Residues H80 and H82 each coordinate Fe(3+). Zn(2+) is bound by residues H80 and H82. Positions 89, 152, and 185 each coordinate 4-imidazolone-5-propanoate. Y152 contacts N-formimidoyl-L-glutamate. H250 is a Fe(3+) binding site. H250 provides a ligand contact to Zn(2+). Q253 is a binding site for 4-imidazolone-5-propanoate. A Fe(3+)-binding site is contributed by D325. Position 325 (D325) interacts with Zn(2+). Residues N327 and G329 each contribute to the N-formimidoyl-L-glutamate site. Position 330 (T330) interacts with 4-imidazolone-5-propanoate.

The protein belongs to the metallo-dependent hydrolases superfamily. HutI family. The cofactor is Zn(2+). It depends on Fe(3+) as a cofactor.

The protein resides in the cytoplasm. It carries out the reaction 4-imidazolone-5-propanoate + H2O = N-formimidoyl-L-glutamate. It participates in amino-acid degradation; L-histidine degradation into L-glutamate; N-formimidoyl-L-glutamate from L-histidine: step 3/3. Catalyzes the hydrolytic cleavage of the carbon-nitrogen bond in imidazolone-5-propanoate to yield N-formimidoyl-L-glutamate. It is the third step in the universal histidine degradation pathway. The sequence is that of Imidazolonepropionase from Rhizobium meliloti (strain 1021) (Ensifer meliloti).